Consider the following 333-residue polypeptide: T-cell surface glycoprotein CD1b-1 (333 aa).

The signal sequence occupies residues M1–N18. Residues E19–G302 lie on the Extracellular side of the membrane. 4 N-linked (GlcNAc...) asparagine glycosylation sites follow: N38, N75, N146, and N258. Intrachain disulfides connect C120/C184 and C224/C279. The 111-residue stretch at P185–W295 folds into the Ig-like domain. A helical transmembrane segment spans residues L303–F323. The Cytoplasmic segment spans residues W324 to L333. Residues Y329–I332 carry the Internalization signal motif.

In terms of assembly, heterodimer with B2M (beta-2-microglobulin). Interacts with saposin C.

The protein localises to the cell membrane. The protein resides in the endosome membrane. Its subcellular location is the lysosome membrane. Its function is as follows. Antigen-presenting protein that binds self and non-self lipid and glycolipid antigens and presents them to T-cell receptors on natural killer T-cells. In Ovis aries (Sheep), this protein is T-cell surface glycoprotein CD1b-1.